Consider the following 90-residue polypeptide: Molybdopterin synthase sulfur carrier subunit (90 aa).

Glycine 90 carries the 1-thioglycine; alternate modification. Glycine 90 carries the glycyl adenylate; alternate modification.

This sequence belongs to the MoaD family. MOCS2A subfamily. As to quaternary structure, heterotetramer; composed of 2 small (Mocs2A) and 2 large (Mocs2B) subunits. C-terminal thiocarboxylation occurs in 2 steps, it is first acyl-adenylated (-COAMP) via the hesA/moeB/thiF part of MOCS3, then thiocarboxylated (-COSH) via the rhodanese domain of MOCS3.

It localises to the cytoplasm. It functions in the pathway cofactor biosynthesis; molybdopterin biosynthesis. Functionally, acts as a sulfur carrier required for molybdopterin biosynthesis. Component of the molybdopterin synthase complex that catalyzes the conversion of precursor Z into molybdopterin by mediating the incorporation of 2 sulfur atoms into precursor Z to generate a dithiolene group. In the complex, serves as sulfur donor by being thiocarboxylated (-COSH) at its C-terminus by MOCS3. After interaction with Mocs2B, the sulfur is then transferred to precursor Z to form molybdopterin. The chain is Molybdopterin synthase sulfur carrier subunit from Drosophila yakuba (Fruit fly).